The sequence spans 205 residues: High frequency lysogenization protein HflD homolog (205 aa).

Belongs to the HflD family.

Its subcellular location is the cytoplasm. It localises to the cell inner membrane. The chain is High frequency lysogenization protein HflD homolog from Alkalilimnicola ehrlichii (strain ATCC BAA-1101 / DSM 17681 / MLHE-1).